A 101-amino-acid polypeptide reads, in one-letter code: Putative monooxygenase Rv0793 (101 aa).

In terms of domain architecture, ABM spans 5-93 (VAVIARFMPR…LTRPVAVTVL (89 aa)).

In terms of assembly, homodimer.

Putative monooygenase that might be involved in antibiotic biosynthesis, or may act as reactive oxygen species scavenger that could help in evading host defenses. This is Putative monooxygenase Rv0793 from Mycobacterium tuberculosis (strain ATCC 25618 / H37Rv).